Consider the following 106-residue polypeptide: Phosphoribosyl-ATP pyrophosphatase 1 (106 aa).

The protein belongs to the PRA-PH family.

The protein resides in the cytoplasm. The catalysed reaction is 1-(5-phospho-beta-D-ribosyl)-ATP + H2O = 1-(5-phospho-beta-D-ribosyl)-5'-AMP + diphosphate + H(+). The protein operates within amino-acid biosynthesis; L-histidine biosynthesis; L-histidine from 5-phospho-alpha-D-ribose 1-diphosphate: step 2/9. This Bradyrhizobium diazoefficiens (strain JCM 10833 / BCRC 13528 / IAM 13628 / NBRC 14792 / USDA 110) protein is Phosphoribosyl-ATP pyrophosphatase 1 (hisE1).